A 283-amino-acid chain; its full sequence is tRNA-cytidine(32) 2-sulfurtransferase (283 aa).

Positions 37–42 (SGGKDS) match the PP-loop motif motif. Cys112, Cys115, and Cys203 together coordinate [4Fe-4S] cluster.

The protein belongs to the TtcA family. Homodimer. It depends on Mg(2+) as a cofactor. [4Fe-4S] cluster is required as a cofactor.

It is found in the cytoplasm. It carries out the reaction cytidine(32) in tRNA + S-sulfanyl-L-cysteinyl-[cysteine desulfurase] + AH2 + ATP = 2-thiocytidine(32) in tRNA + L-cysteinyl-[cysteine desulfurase] + A + AMP + diphosphate + H(+). The protein operates within tRNA modification. Its function is as follows. Catalyzes the ATP-dependent 2-thiolation of cytidine in position 32 of tRNA, to form 2-thiocytidine (s(2)C32). The sulfur atoms are provided by the cysteine/cysteine desulfurase (IscS) system. The protein is tRNA-cytidine(32) 2-sulfurtransferase of Legionella pneumophila (strain Corby).